The primary structure comprises 729 residues: ATP-dependent RNA helicase DHX15 homolog (729 aa).

The tract at residues 1–25 is disordered; it reads MSKRRIEVGETYGSKAKKDPEASSS. In terms of domain architecture, Helicase ATP-binding spans 82 to 246; sequence MRLLSLHQCI…FDNAPLMKVP (165 aa). ATP is bound at residue 95-102; the sequence is GETGSGKT. The DEAH box motif lies at 193–196; it reads DEAH. Residues 271-451 enclose the Helicase C-terminal domain; the sequence is TVIQIHMCEE…TVVLQLKKLG (181 aa).

Belongs to the DEAD box helicase family. DEAH subfamily. DDX15/PRP43 sub-subfamily.

It catalyses the reaction ATP + H2O = ADP + phosphate + H(+). Functionally, RNA helicase involved in mRNA processing and antiviral innate immunity. Acts as an activator of the p38 MAPK cascade. In Drosophila melanogaster (Fruit fly), this protein is ATP-dependent RNA helicase DHX15 homolog.